Consider the following 86-residue polypeptide: Small ribosomal subunit protein bS20 (86 aa).

The segment at 1–27 (MANSKSAKKRAIQAEKRRQHNASRRSM) is disordered.

The protein belongs to the bacterial ribosomal protein bS20 family.

Its function is as follows. Binds directly to 16S ribosomal RNA. The sequence is that of Small ribosomal subunit protein bS20 from Vibrio atlanticus (strain LGP32) (Vibrio splendidus (strain Mel32)).